A 1317-amino-acid polypeptide reads, in one-letter code: DNA-directed RNA polymerase subunit beta' (1317 aa).

Residues cysteine 60, cysteine 62, cysteine 75, and cysteine 78 each coordinate Zn(2+). Mg(2+) contacts are provided by aspartate 535, aspartate 537, and aspartate 539. Zn(2+) contacts are provided by cysteine 890, cysteine 967, cysteine 974, and cysteine 977.

It belongs to the RNA polymerase beta' chain family. In terms of assembly, the RNAP catalytic core consists of 2 alpha, 1 beta, 1 beta' and 1 omega subunit. When a sigma factor is associated with the core the holoenzyme is formed, which can initiate transcription. Requires Mg(2+) as cofactor. Zn(2+) is required as a cofactor.

The catalysed reaction is RNA(n) + a ribonucleoside 5'-triphosphate = RNA(n+1) + diphosphate. In terms of biological role, DNA-dependent RNA polymerase catalyzes the transcription of DNA into RNA using the four ribonucleoside triphosphates as substrates. This Mycolicibacterium smegmatis (strain ATCC 700084 / mc(2)155) (Mycobacterium smegmatis) protein is DNA-directed RNA polymerase subunit beta'.